A 1247-amino-acid polypeptide reads, in one-letter code: Lon protease homolog 2, peroxisomal (1247 aa).

The Lon N-terminal domain maps to 22–402 (LPTYTLDSNL…LINEMILQLI (381 aa)). Disordered stretches follow at residues 76–103 (SGNS…ETYH), 447–503 (TKNR…DVDD), and 626–655 (DQSD…SPTS). The span at 459 to 477 (PGPASSSGPSFSNGKSSPG) shows a compositional bias: low complexity. A compositionally biased stretch (basic and acidic residues) spans 626 to 639 (DQSDKSQPIKDNSK). 721–728 (GPPGTGKT) is a binding site for ATP. In terms of domain architecture, Lon proteolytic spans 989–1230 (TVGVGVVHGL…YDIIKIVWNE (242 aa)). Catalysis depends on residues Ser1099 and Lys1142.

Belongs to the peptidase S16 family.

It localises to the peroxisome matrix. It catalyses the reaction Hydrolysis of proteins in presence of ATP.. Functionally, ATP-dependent serine protease that mediates the selective degradation of misfolded and unassembled polypeptides in the peroxisomal matrix. Necessary for type 2 peroxisome targeting signal (PTS2)-containing protein processing and facilitates peroxisome matrix protein import. This Candida dubliniensis (strain CD36 / ATCC MYA-646 / CBS 7987 / NCPF 3949 / NRRL Y-17841) (Yeast) protein is Lon protease homolog 2, peroxisomal.